Consider the following 1388-residue polypeptide: Retrotransposon Gag-like protein 9 (1388 aa).

5 disordered regions span residues A491 to S511, T769 to S790, G895 to S918, T1100 to V1138, and A1336 to K1388. Residues G1103 to M1123 are compositionally biased toward polar residues. The span at Y1359–L1374 shows a compositional bias: basic and acidic residues.

This Homo sapiens (Human) protein is Retrotransposon Gag-like protein 9.